Here is a 354-residue protein sequence, read N- to C-terminus: Fructose-1,6-bisphosphatase class 1 (354 aa).

Mg(2+) contacts are provided by Glu112, Asp134, Leu136, and Asp137. Substrate-binding positions include 137–140 (DGSS), Asn229, Tyr257, and Lys287. Glu293 is a Mg(2+) binding site.

Belongs to the FBPase class 1 family. As to quaternary structure, homotetramer. Requires Mg(2+) as cofactor.

Its subcellular location is the cytoplasm. It catalyses the reaction beta-D-fructose 1,6-bisphosphate + H2O = beta-D-fructose 6-phosphate + phosphate. It participates in carbohydrate biosynthesis; Calvin cycle. The chain is Fructose-1,6-bisphosphatase class 1 from Trichodesmium erythraeum (strain IMS101).